The primary structure comprises 238 residues: Ribonuclease PH (238 aa).

Residues Arg86 and 124–126 contribute to the phosphate site; that span reads GTR.

Belongs to the RNase PH family. As to quaternary structure, homohexameric ring arranged as a trimer of dimers.

The catalysed reaction is tRNA(n+1) + phosphate = tRNA(n) + a ribonucleoside 5'-diphosphate. Functionally, phosphorolytic 3'-5' exoribonuclease that plays an important role in tRNA 3'-end maturation. Removes nucleotide residues following the 3'-CCA terminus of tRNAs; can also add nucleotides to the ends of RNA molecules by using nucleoside diphosphates as substrates, but this may not be physiologically important. Probably plays a role in initiation of 16S rRNA degradation (leading to ribosome degradation) during starvation. The polypeptide is Ribonuclease PH (Rhizorhabdus wittichii (strain DSM 6014 / CCUG 31198 / JCM 15750 / NBRC 105917 / EY 4224 / RW1) (Sphingomonas wittichii)).